Here is a 176-residue protein sequence, read N- to C-terminus: RNA pyrophosphohydrolase (176 aa).

A Nudix hydrolase domain is found at 6 to 149 (GYRPNVGIVI…KRDVYRRVMK (144 aa)). A Nudix box motif is present at residues 38 to 59 (GGINPGESAEQAMYRELFEEVG).

It belongs to the Nudix hydrolase family. RppH subfamily. Requires a divalent metal cation as cofactor.

Its function is as follows. Accelerates the degradation of transcripts by removing pyrophosphate from the 5'-end of triphosphorylated RNA, leading to a more labile monophosphorylated state that can stimulate subsequent ribonuclease cleavage. In Shigella boydii serotype 4 (strain Sb227), this protein is RNA pyrophosphohydrolase.